We begin with the raw amino-acid sequence, 376 residues long: MQALNTTKRLMSTKQFPLFKSLLYSSHDPADCTQVLKVHSYTPKVGADESILLRTLAFPINPSDINQLQGVYPSVPEKTLDYSTEKPAAIAGNEGVFEVMSVPQGERRLAVGDWVIPLYSNTGTWTNYQTCRDAGTLVKVNGLDLYTAATIAVNGCTAYQLVNDYVQWDPSGNEWIVQNAGTSAVSKIVTQVAQARGVKTLSVIRDRENFAEVAKELEERYGATKVISETQNNDKDFSKDELPVILGPNARVRLALNSVGGKSSGAIARKLERDGTMLTYGGMSRQPVTVPTTLLIFNGLKSLGYWITENTKRNPQSKIDTISALMRMYGDGQLQPPEADIKKIEWDVQKMNDEQLLEAVKNGIQSNGKSVVVLKW.

The Proton donor role is filled by Tyr-72. Residues Asn-154, 182–185 (TSAV), 205–207 (RDR), 280–283 (YGGM), 305–307 (YWI), and Lys-369 contribute to the NADP(+) site.

This sequence belongs to the zinc-containing alcohol dehydrogenase family. Quinone oxidoreductase subfamily. In terms of assembly, homodimer.

It localises to the mitochondrion matrix. It carries out the reaction a 2,3-saturated acyl-[ACP] + NADP(+) = a (2E)-enoyl-[ACP] + NADPH + H(+). In terms of biological role, catalyzes the NADPH-dependent reduction of trans-2-enoyl thioesters in mitochondrial fatty acid synthesis (fatty acid synthesis type II). Fatty acid chain elongation in mitochondria uses acyl carrier protein (ACP) as an acyl group carrier, but the enzyme accepts both ACP and CoA thioesters as substrates in vitro. Required for respiration and the maintenance of the mitochondrial compartment. This chain is Enoyl-[acyl-carrier-protein] reductase, mitochondrial (ETR1), found in Eremothecium gossypii (strain ATCC 10895 / CBS 109.51 / FGSC 9923 / NRRL Y-1056) (Yeast).